The primary structure comprises 66 residues: Regulator of G-protein signaling 11 (66 aa).

The 66-residue stretch at E1–L66 folds into the RGS domain.

Heterodimer with Gbeta5. Interacts with RGS7BP, leading to regulate the subcellular location of the heterodimer formed with Gbeta5.

In terms of biological role, inhibits signal transduction by increasing the GTPase activity of G protein alpha subunits thereby driving them into their inactive GDP-bound form. The chain is Regulator of G-protein signaling 11 (Rgs11) from Rattus norvegicus (Rat).